The following is a 306-amino-acid chain: MMQSKIESIIEECRKYTREGEVASYIPELKKADKDALGIYIDKLDGNEFCAGDYDTKFTIQSISKIIALIIAIMDNGMEKVLSKVGVEPSAYSFNSIVTLEVKNANKPLNPMINAGAIATVSLIKGNSPEEIIERILEFTRKVTGNKNIKVNEEVYQSEKKTGDRNRSLAYFMKGTGIIEKDVEKVLDAYFQQCSIEVTCKDIAKIASFLANDGVLPSTGERIIPAEVAKIVKAVMVTCGMYDASGSFAVKVGIPSKSGVGGGILATVPGVMGIGVFGPALDKKGNSIAGVKILERLSEELNLSIF.

The substrate site is built by serine 62, asparagine 114, glutamate 159, asparagine 166, tyrosine 190, tyrosine 242, and valine 260.

Belongs to the glutaminase family. In terms of assembly, homotetramer.

The catalysed reaction is L-glutamine + H2O = L-glutamate + NH4(+). This Clostridium tetani (strain Massachusetts / E88) protein is Glutaminase.